Consider the following 369-residue polypeptide: Protein-glutamate methylesterase/protein-glutamine glutaminase 1 (369 aa).

Residues 11–128 form the Response regulatory domain; it reads RVLIVDDSAA…DLERQEASIR (118 aa). Residue Asp-62 is modified to 4-aspartylphosphate. Residues 136–168 are disordered; the sequence is ATETTRRRSQPEPRPLAPGPKLTADEILPARPP. The region spanning 170-358 is the CheB-type methylesterase domain; that stretch reads PVPETMPVVC…LDRLAARIME (189 aa). Active-site residues include Ser-183, His-209, and Asp-305.

This sequence belongs to the CheB family. In terms of processing, phosphorylated by CheA. Phosphorylation of the N-terminal regulatory domain activates the methylesterase activity.

The protein localises to the cytoplasm. The catalysed reaction is [protein]-L-glutamate 5-O-methyl ester + H2O = L-glutamyl-[protein] + methanol + H(+). It carries out the reaction L-glutaminyl-[protein] + H2O = L-glutamyl-[protein] + NH4(+). Its function is as follows. Involved in chemotaxis. Part of a chemotaxis signal transduction system that modulates chemotaxis in response to various stimuli. Catalyzes the demethylation of specific methylglutamate residues introduced into the chemoreceptors (methyl-accepting chemotaxis proteins or MCP) by CheR. Also mediates the irreversible deamidation of specific glutamine residues to glutamic acid. This is Protein-glutamate methylesterase/protein-glutamine glutaminase 1 from Cereibacter sphaeroides (strain ATCC 17023 / DSM 158 / JCM 6121 / CCUG 31486 / LMG 2827 / NBRC 12203 / NCIMB 8253 / ATH 2.4.1.) (Rhodobacter sphaeroides).